The chain runs to 89 residues: Small ribosomal subunit protein uS14A (89 aa).

Belongs to the universal ribosomal protein uS14 family. In terms of assembly, part of the 30S ribosomal subunit. Contacts proteins S3 and S10.

Its function is as follows. Binds 16S rRNA, required for the assembly of 30S particles and may also be responsible for determining the conformation of the 16S rRNA at the A site. In Staphylococcus aureus (strain Newman), this protein is Small ribosomal subunit protein uS14A.